Here is a 665-residue protein sequence, read N- to C-terminus: Anaphase-promoting complex subunit 3 (665 aa).

One copy of the TPR 1 repeat lies at 115–148 (SCMLDVLGTMYKKAGFLKKATDCFVEAVSINPYN). The DNA-binding element occupies 191-257 (VPEPSFLKKS…HQSLKLQSQS (67 aa)). TPR repeat units lie at residues 329 to 362 (LLKL…QQNT), 363 to 396 (PFVL…SPSR), 431 to 464 (PESW…DPTF), 466 to 498 (YAYT…NVRH), 499 to 532 (YNAW…NPNN), 534 to 566 (VLIT…DEKS), 568 to 600 (LARF…APDE), and 601 to 634 (ANVH…DGKA).

Belongs to the APC3/CDC27 family. The APC/C is composed of at least 13 subunits: apc1, apc2, nuc2, apc4, apc5, cut9, apc8, apc10, apc11, hcn1, apc13, apc14 and apc15. Interacts with apc10 and cut9.

The protein localises to the nucleus. Its function is as follows. Component of the anaphase-promoting complex/cyclosome (APC/C), a cell cycle-regulated E3 ubiquitin-protein ligase complex that controls progression through mitosis and the G1 phase of the cell cycle. The APC/C is thought to confer substrate specificity and, in the presence of ubiquitin-conjugating E2 enzymes, it catalyzes the formation of protein-ubiquitin conjugates that are subsequently degraded by the 26S proteasome. Interacts with spindle apparatus, chromosomes, or nuclear envelope, and interconnect nuclear and cytoskeletal functions in mitosis, so the elongation of the spindle in anaphase is blocked. In Schizosaccharomyces pombe (strain 972 / ATCC 24843) (Fission yeast), this protein is Anaphase-promoting complex subunit 3 (nuc2).